A 503-amino-acid polypeptide reads, in one-letter code: Probable cytosol aminopeptidase (503 aa).

Positions 274 and 279 each coordinate Mn(2+). Lys-286 is an active-site residue. Asp-297, Asp-356, and Glu-358 together coordinate Mn(2+). Residue Arg-360 is part of the active site.

It belongs to the peptidase M17 family. Mn(2+) is required as a cofactor.

The protein localises to the cytoplasm. The enzyme catalyses Release of an N-terminal amino acid, Xaa-|-Yaa-, in which Xaa is preferably Leu, but may be other amino acids including Pro although not Arg or Lys, and Yaa may be Pro. Amino acid amides and methyl esters are also readily hydrolyzed, but rates on arylamides are exceedingly low.. The catalysed reaction is Release of an N-terminal amino acid, preferentially leucine, but not glutamic or aspartic acids.. In terms of biological role, presumably involved in the processing and regular turnover of intracellular proteins. Catalyzes the removal of unsubstituted N-terminal amino acids from various peptides. This Burkholderia cenocepacia (strain ATCC BAA-245 / DSM 16553 / LMG 16656 / NCTC 13227 / J2315 / CF5610) (Burkholderia cepacia (strain J2315)) protein is Probable cytosol aminopeptidase.